We begin with the raw amino-acid sequence, 559 residues long: MTDESTAEAGRDFIRDIVAADLASGRHKSIVTRFPPEPNGYLHLGHAKSICLNFGIAEDFGGRCHLRFDDTNPAKEEQEFIDAIQRDVRWLGFDWGEHLYYASDYFEQLYAWAQHLIREGKAYVDDQTQEEIRLARGTLTEPGRNSPFRDRPADENLDLFARMRAGEFPNGARVLRAKIDMAAGNINLRDPVLYRILHATHPRTGNVWSIYPSYDFAHGQSDSIEHITHSVCTLEFEDHRPLYDWFLDNLPVPSRPRQYEFARLNVTHTLLSKRVLTELVRGGHVAGWDDPRMPTLAGLQRRGVPAEALREFVKRIGVAKANSTVDVGMLDFAIREALNRSASRRMAVLRPLKVVIENYPEGQSEELEAVNHPDDPSQGTRRIRFGREIYIEQEDFMENPPKKFFRLSPGREVRLRYAYFITCREVVKNPAGDVLELRCTYDPATRGGNAPDGRKVKATMHWVNTADAVPAEVRLYGHLFETEQPDAANFASELNPQSVQILSGCMVEPALARDDAGAAVQFERQGYFYRDRDSAPGRLVFNRTVGLRDTWAKVAAAGS.

Residues Pro36 to His46 carry the 'HIGH' region motif. Residues Glu37 to Asn39 and His43 to Ser49 each bind ATP. Asp69 and Tyr214 together coordinate L-glutamine. ATP is bound by residues Thr233, Arg263–Leu264, and Leu271–Lys273. A 'KMSKS' region motif is present at residues Leu270–Arg274.

It belongs to the class-I aminoacyl-tRNA synthetase family. In terms of assembly, monomer.

The protein localises to the cytoplasm. It carries out the reaction tRNA(Gln) + L-glutamine + ATP = L-glutaminyl-tRNA(Gln) + AMP + diphosphate. The protein is Glutamine--tRNA ligase of Nitrobacter winogradskyi (strain ATCC 25391 / DSM 10237 / CIP 104748 / NCIMB 11846 / Nb-255).